Reading from the N-terminus, the 357-residue chain is Protein-L-isoaspartate O-methyltransferase domain-containing protein 1 (357 aa).

Residue Gly2 is the site of N-myristoyl glycine attachment. Ser64 is an active-site residue. 3 adoMet binding motif regions span residues Leu85 to Leu94, Tyr160 to Tyr164, and Leu181 to Ile191. A BC-box region spans residues Val240–Tyr250. The tract at residues Pro299–Gln331 is disordered. The span at Asp301–Glu317 shows a compositional bias: acidic residues. Residues Lys318–Gln331 show a composition bias toward basic and acidic residues. The interval Leu341–Pro344 is CUL-box.

It belongs to the methyltransferase superfamily. L-isoaspartyl/D-aspartyl protein methyltransferase family. Component of the probable ECS(PCMTD1) E3 ubiquitin-protein ligase complex, at least composed of CUL5, ELOB, ELOC, RBX2 and PCMTD1. Interacts (via the BC-box) with ELOB and ELOC; the interaction is direct and stabilizes PCMTD1.

The protein localises to the cytoplasm. The protein resides in the membrane. Its function is as follows. Substrate recognition component of an ECS (Elongin BC-CUL5-SOCS-box protein) E3 ubiquitin ligase complex which mediates the ubiquitination and subsequent proteasomal degradation of target proteins. Specifically binds to the methyltransferase cofactor S-adenosylmethionine (AdoMet) via the N-terminal AdoMet binding motif, but does not display methyltransferase activity. May provide an alternate maintenance pathway for modified proteins by acting as a damage-specific E3 ubiquitin ligase adaptor protein. This is Protein-L-isoaspartate O-methyltransferase domain-containing protein 1 (Pcmtd1) from Mus musculus (Mouse).